The following is an 81-amino-acid chain: MADPADVKKLSFETAMEELESIVKRLEDGKVPLEESVAIYERGEALKRRCEELLRTAEARVDKITTDAAGQPTGTAPLDVE.

It belongs to the XseB family. As to quaternary structure, heterooligomer composed of large and small subunits.

It is found in the cytoplasm. The catalysed reaction is Exonucleolytic cleavage in either 5'- to 3'- or 3'- to 5'-direction to yield nucleoside 5'-phosphates.. Its function is as follows. Bidirectionally degrades single-stranded DNA into large acid-insoluble oligonucleotides, which are then degraded further into small acid-soluble oligonucleotides. This chain is Exodeoxyribonuclease 7 small subunit, found in Rhodopseudomonas palustris (strain BisA53).